The chain runs to 489 residues: ERO1-like protein alpha (489 aa).

An N-terminal signal peptide occupies residues 1 to 20 (METCVLLLGLFLTSVHVTTA). Intrachain disulfides connect Cys-27/Cys-40, Cys-29/Cys-38, Cys-77/Cys-382, Cys-86/Cys-91, Cys-86/Cys-123, Cys-91/Cys-96, Cys-200/Cys-232, and Cys-385/Cys-388. The FAD site is built by Arg-179, Thr-181, and Trp-192. 2 residues coordinate FAD: Ser-243 and His-246. Asn-271 is a glycosylation site (N-linked (GlcNAc...) asparagine). Residues Arg-278 and Arg-291 each contribute to the FAD site. Asn-375 carries an N-linked (GlcNAc...) asparagine glycan.

This sequence belongs to the EROs family. As to quaternary structure, predominantly monomer. May function both as a monomer and a homodimer. FAD serves as cofactor. In terms of processing, the Cys-86/Cys-91 and Cys-385/Cys-388 disulfide bonds constitute the redox-active center. The Cys-86/Cys-91 disulfide bond may accept electron from protein disulfide isomerase (PDI) and funnel them to the active site disulfide Cys-385/Cys-388.

It is found in the endoplasmic reticulum membrane. Its activity is regulated as follows. Enzyme activity is tightly regulated to prevent the accumulation of reactive oxygen species in the endoplasmic reticulum. Reversibly down-regulated by the formation of disulfide bonds between the active site Cys-86 and Cys-123, and between Cys-91 and Cys-96. Glutathione may be required to regulate its activity in the endoplasmic reticulum. Oxidoreductase involved in disulfide bond formation in the endoplasmic reticulum. Efficiently reoxidizes P4HB/PDI, the enzyme catalyzing protein disulfide formation, in order to allow P4HB to sustain additional rounds of disulfide formation. Following P4HB reoxidation, passes its electrons to molecular oxygen via FAD, leading to the production of reactive oxygen species (ROS) in the cell. Required for the folding of immunoglobulins. This Danio rerio (Zebrafish) protein is ERO1-like protein alpha.